A 403-amino-acid chain; its full sequence is MSGSDAGLEEEPELSITLTLRMLMHGKEVGSIIGKKGETVKRIREQSSARITISEGSCPERITTITGSTAAVFHAVSMIAFKLDEDLCAAPANGGNVSRPPVTLRLVIPASQCGSLIGKAGTKIKEIRETTGAQVQVAGDLLPNSTERAVTVSGVPDAIILCVRQICAVILESPPKGATIPYHPSLSLGTVLLSTNQGFSVQGQYGTVTPAEVTKLQQLSGHAVPFASPSMVPGLDPSTQTSSQEFLVPNDLIGCVIGRQGSKISEIRQMSGAHIKIGNQAEGAGERHVTITGSPVSIALAQYLITACLETAKSTSGGTPGSAPTDLPAPFSPPLTALPTAPPGLLGTPYAISLSNFIGLKPVPFLALPPASPGPPPGLAAYTAKMAAANGSKKAERQKFSPY.

3 consecutive KH domains span residues 17–67 (TLTL…TITG), 101–154 (PVTL…TVSG), and 241–293 (TSSQ…TITG).

Its subcellular location is the cytoplasm. In terms of biological role, single-stranded nucleic acid binding protein that binds preferentially to oligo dC. This Bos taurus (Bovine) protein is Poly(rC)-binding protein 4 (PCBP4).